The primary structure comprises 189 residues: Putative zinc finger protein ORF189 (189 aa).

A C2H2-type zinc finger spans residues 114 to 137 (YVCPYCVSRFPTVRALKIHLKRRH).

This chain is Putative zinc finger protein ORF189, found in Acidianus two-tailed virus (ATV).